The sequence spans 182 residues: Adenine phosphoribosyltransferase (182 aa).

Belongs to the purine/pyrimidine phosphoribosyltransferase family. In terms of assembly, homodimer.

The protein localises to the cytoplasm. It carries out the reaction AMP + diphosphate = 5-phospho-alpha-D-ribose 1-diphosphate + adenine. It participates in purine metabolism; AMP biosynthesis via salvage pathway; AMP from adenine: step 1/1. Functionally, catalyzes a salvage reaction resulting in the formation of AMP, that is energically less costly than de novo synthesis. This Stutzerimonas stutzeri (strain A1501) (Pseudomonas stutzeri) protein is Adenine phosphoribosyltransferase.